Here is a 122-residue protein sequence, read N- to C-terminus: MIQQQTYLNVADNSGARKLMCLRVLGTGNCRYGGIGDEIIAVVKDAIPNMPVKKSDVVKAVIVRTRHPLRRASGMTIRFDDNAAVIINNDGNPKGTRVFGPVARELRDKNYTKIVSLAPEVL.

Belongs to the universal ribosomal protein uL14 family. Part of the 50S ribosomal subunit. Forms a cluster with proteins L3 and L19. In the 70S ribosome, L14 and L19 interact and together make contacts with the 16S rRNA in bridges B5 and B8.

Functionally, binds to 23S rRNA. Forms part of two intersubunit bridges in the 70S ribosome. The protein is Large ribosomal subunit protein uL14 of Gloeothece citriformis (strain PCC 7424) (Cyanothece sp. (strain PCC 7424)).